A 429-amino-acid polypeptide reads, in one-letter code: 3-phosphoshikimate 1-carboxyvinyltransferase (429 aa).

Residues K23, S24, and R28 each coordinate 3-phosphoshikimate. K23 provides a ligand contact to phosphoenolpyruvate. Positions 95 and 123 each coordinate phosphoenolpyruvate. 3-phosphoshikimate contacts are provided by S168, Q170, D316, and K343. Phosphoenolpyruvate is bound at residue Q170. D316 acts as the Proton acceptor in catalysis. Residues R347 and R389 each coordinate phosphoenolpyruvate.

The protein belongs to the EPSP synthase family. Monomer.

The protein localises to the cytoplasm. The catalysed reaction is 3-phosphoshikimate + phosphoenolpyruvate = 5-O-(1-carboxyvinyl)-3-phosphoshikimate + phosphate. It functions in the pathway metabolic intermediate biosynthesis; chorismate biosynthesis; chorismate from D-erythrose 4-phosphate and phosphoenolpyruvate: step 6/7. Catalyzes the transfer of the enolpyruvyl moiety of phosphoenolpyruvate (PEP) to the 5-hydroxyl of shikimate-3-phosphate (S3P) to produce enolpyruvyl shikimate-3-phosphate and inorganic phosphate. The sequence is that of 3-phosphoshikimate 1-carboxyvinyltransferase from Bacillus cereus (strain 03BB102).